Consider the following 58-residue polypeptide: Photosystem II reaction center X protein (58 aa).

A helical membrane pass occupies residues 27–47 (IGSFLAAAAFIVVPAASFLIW).

This sequence belongs to the PsbX family. Type 2 subfamily. In terms of assembly, PSII consists of a core antenna complex that captures photons, and an electron transfer chain that converts photonic excitation into a charge separation. PSII forms dimeric complexes.

It is found in the cellular thylakoid membrane. Functionally, involved in the binding and/or turnover of quinones at the Q(B) site of Photosystem II. The chain is Photosystem II reaction center X protein from Prochlorococcus marinus (strain MIT 9211).